A 230-amino-acid polypeptide reads, in one-letter code: ATP synthase subunit a (230 aa).

The next 6 membrane-spanning stretches (helical) occupy residues alanine 26–alanine 46, phenylalanine 83–isoleucine 103, asparagine 112–isoleucine 132, phenylalanine 143–leucine 163, leucine 182–methionine 202, and glycine 203–glutamine 223.

This sequence belongs to the ATPase A chain family. In terms of assembly, F-type ATPases have 2 components, CF(1) - the catalytic core - and CF(0) - the membrane proton channel. CF(1) has five subunits: alpha(3), beta(3), gamma(1), delta(1), epsilon(1). CF(0) has three main subunits: a(1), b(2) and c(9-12). The alpha and beta chains form an alternating ring which encloses part of the gamma chain. CF(1) is attached to CF(0) by a central stalk formed by the gamma and epsilon chains, while a peripheral stalk is formed by the delta and b chains.

It is found in the cell inner membrane. In terms of biological role, key component of the proton channel; it plays a direct role in the translocation of protons across the membrane. This is ATP synthase subunit a from Trichlorobacter lovleyi (strain ATCC BAA-1151 / DSM 17278 / SZ) (Geobacter lovleyi).